Consider the following 483-residue polypeptide: UDP-N-acetylmuramoyl-L-alanyl-D-glutamate--2,6-diaminopimelate ligase 2 (483 aa).

Serine 30 serves as a coordination point for UDP-N-acetyl-alpha-D-muramoyl-L-alanyl-D-glutamate. 111–117 provides a ligand contact to ATP; that stretch reads GTNGKTT. Residues 156-157, threonine 183, and arginine 191 contribute to the UDP-N-acetyl-alpha-D-muramoyl-L-alanyl-D-glutamate site; that span reads TT. An N6-carboxylysine modification is found at lysine 223. Meso-2,6-diaminopimelate is bound by residues arginine 380, 404 to 407, glycine 456, and glutamate 460; that span reads DNPR. The short motif at 404–407 is the Meso-diaminopimelate recognition motif element; that stretch reads DNPR.

Belongs to the MurCDEF family. MurE subfamily. Requires Mg(2+) as cofactor. In terms of processing, carboxylation is probably crucial for Mg(2+) binding and, consequently, for the gamma-phosphate positioning of ATP.

The protein resides in the cytoplasm. It carries out the reaction UDP-N-acetyl-alpha-D-muramoyl-L-alanyl-D-glutamate + meso-2,6-diaminopimelate + ATP = UDP-N-acetyl-alpha-D-muramoyl-L-alanyl-gamma-D-glutamyl-meso-2,6-diaminopimelate + ADP + phosphate + H(+). It participates in cell wall biogenesis; peptidoglycan biosynthesis. Its function is as follows. Catalyzes the addition of meso-diaminopimelic acid to the nucleotide precursor UDP-N-acetylmuramoyl-L-alanyl-D-glutamate (UMAG) in the biosynthesis of bacterial cell-wall peptidoglycan. This chain is UDP-N-acetylmuramoyl-L-alanyl-D-glutamate--2,6-diaminopimelate ligase 2, found in Clostridium acetobutylicum (strain ATCC 824 / DSM 792 / JCM 1419 / IAM 19013 / LMG 5710 / NBRC 13948 / NRRL B-527 / VKM B-1787 / 2291 / W).